The primary structure comprises 461 residues: Argininosuccinate lyase (461 aa).

This sequence belongs to the lyase 1 family. Argininosuccinate lyase subfamily.

The protein localises to the cytoplasm. It carries out the reaction 2-(N(omega)-L-arginino)succinate = fumarate + L-arginine. It participates in amino-acid biosynthesis; L-arginine biosynthesis; L-arginine from L-ornithine and carbamoyl phosphate: step 3/3. This is Argininosuccinate lyase from Nitrosomonas europaea (strain ATCC 19718 / CIP 103999 / KCTC 2705 / NBRC 14298).